Here is a 458-residue protein sequence, read N- to C-terminus: UDP-N-acetylmuramate--L-alanine ligase (458 aa).

118–124 lines the ATP pocket; sequence GTHGKTT.

This sequence belongs to the MurCDEF family.

The protein resides in the cytoplasm. It carries out the reaction UDP-N-acetyl-alpha-D-muramate + L-alanine + ATP = UDP-N-acetyl-alpha-D-muramoyl-L-alanine + ADP + phosphate + H(+). The protein operates within cell wall biogenesis; peptidoglycan biosynthesis. In terms of biological role, cell wall formation. The polypeptide is UDP-N-acetylmuramate--L-alanine ligase (Clostridium botulinum (strain ATCC 19397 / Type A)).